The chain runs to 165 residues: Nucleotide-binding protein SYNW1816 (165 aa).

The protein belongs to the YajQ family.

In terms of biological role, nucleotide-binding protein. The polypeptide is Nucleotide-binding protein SYNW1816 (Parasynechococcus marenigrum (strain WH8102)).